A 1627-amino-acid chain; its full sequence is Adhesin P1 (1627 aa).

The first 59 residues, M1–T59, serve as a signal peptide directing secretion. Disordered regions lie at residues L219 to G238, N252 to P355, W898 to D953, and S1274 to D1362. The span at T224–G234 shows a compositional bias: polar residues. A compositionally biased stretch (low complexity) spans T261–G276. A compositionally biased stretch (basic and acidic residues) spans T282–S297. Composition is skewed to polar residues over residues A903–N933, Q939–D953, and S1274–T1297. The segment covering S1307–Q1320 has biased composition (gly residues). The span at S1341–N1352 shows a compositional bias: low complexity. The segment at G1403 to I1415 is cytadherence epitope. A helical transmembrane segment spans residues A1527–I1547. A disordered region spans residues Q1589–A1627. The segment covering A1604 to A1627 has biased composition (pro residues).

Belongs to the adhesin P1 family.

The protein resides in the cell membrane. The protein localises to the cell projection. It is found in the attachment organelle. Its subcellular location is the cell surface. Functionally, the protein is the major adhesin mediating the attachment of this mycoplasma to respiratory epithelium. The sequence is that of Adhesin P1 (mgpA) from Mycoplasma pneumoniae (strain ATCC 29342 / M129 / Subtype 1) (Mycoplasmoides pneumoniae).